Here is a 364-residue protein sequence, read N- to C-terminus: Lipid-A-disaccharide synthase (364 aa).

Belongs to the LpxB family.

It catalyses the reaction a lipid X + a UDP-2-N,3-O-bis[(3R)-3-hydroxyacyl]-alpha-D-glucosamine = a lipid A disaccharide + UDP + H(+). It participates in bacterial outer membrane biogenesis; LPS lipid A biosynthesis. In terms of biological role, condensation of UDP-2,3-diacylglucosamine and 2,3-diacylglucosamine-1-phosphate to form lipid A disaccharide, a precursor of lipid A, a phosphorylated glycolipid that anchors the lipopolysaccharide to the outer membrane of the cell. The sequence is that of Lipid-A-disaccharide synthase from Campylobacter jejuni (strain RM1221).